Reading from the N-terminus, the 94-residue chain is MQNNTTGMDTKSLKNCGQPKAVCTHCKHSPPCPQPGCVTKRPPVPPRLYLPPPVPIRQPNTKDIDNVEFKYLTRYEQHVIRMLRLCNMYQNLEK.

In terms of assembly, interacts with host GRB2; this interaction alters host cell environment by modulating host signaling pathways.

It is found in the host cytoplasm. Enhances viral DNA replication and virion release. Mechansitically, optimizes viral DNA replication by interacting with host GRB2 to inhibit the negative effect of ERK signaling on B19 viral replication. Plays a role in viral infectivity. Induces apoptosis of primary erythroid progenitor cells. In Human parvovirus B19 (strain HV) (HPV B19), this protein is Host-modulation protein 11K (11K).